The sequence spans 145 residues: Fluoride-specific ion channel FluC 2 (145 aa).

Transmembrane regions (helical) follow at residues 16–36 (MLLV…LSAA), 42–62 (VISV…GWLL), 80–100 (LFAG…AVDT), and 113–133 (ILYA…GIAL). Na(+)-binding residues include G88 and T91.

It belongs to the fluoride channel Fluc/FEX (TC 1.A.43) family.

It localises to the cell membrane. It carries out the reaction fluoride(in) = fluoride(out). With respect to regulation, na(+) is not transported, but it plays an essential structural role and its presence is essential for fluoride channel function. In terms of biological role, fluoride-specific ion channel. Important for reducing fluoride concentration in the cell, thus reducing its toxicity. The chain is Fluoride-specific ion channel FluC 2 from Leifsonia xyli subsp. xyli (strain CTCB07).